The chain runs to 134 residues: MAISLKVLAPNKNVYQGEAEEVILPSTTGQLGILPGHISLVTAIDIGVLRLRMNSQWKSIALMGGFAEIESDEVIVLVNNAEIGSEINVQNAEQDLKEAKLAISKFSENEKNPEKIKALKEISKAEARIQAAKN.

It belongs to the ATPase epsilon chain family. In terms of assembly, F-type ATPases have 2 components, CF(1) - the catalytic core - and CF(0) - the membrane proton channel. CF(1) has five subunits: alpha(3), beta(3), gamma(1), delta(1), epsilon(1). CF(0) has three main subunits: a, b and c.

The protein localises to the cellular thylakoid membrane. Its function is as follows. Produces ATP from ADP in the presence of a proton gradient across the membrane. This Prochlorococcus marinus (strain AS9601) protein is ATP synthase epsilon chain.